A 332-amino-acid polypeptide reads, in one-letter code: Large ribosomal subunit protein mL44 (332 aa).

A mitochondrion-targeting transit peptide spans 1–30; the sequence is MASGLVRLLQQGPRCLLAPVAPKLVPPVRG. The 143-residue stretch at 86 to 228 folds into the RNase III domain; sequence DLLKTAFVNS…LITQMTGKEL (143 aa). A DRBM domain is found at 236–306; that stretch reads NPMGLLVEEL…ARVALRKLYG (71 aa).

Belongs to the ribonuclease III family. Mitochondrion-specific ribosomal protein mL44 subfamily. In terms of assembly, component of the mitochondrial ribosome large subunit (39S) which comprises a 16S rRNA and about 50 distinct proteins.

It is found in the mitochondrion. Its function is as follows. Component of the 39S subunit of mitochondrial ribosome. May have a function in the assembly/stability of nascent mitochondrial polypeptides exiting the ribosome. This chain is Large ribosomal subunit protein mL44 (MRPL44), found in Pongo abelii (Sumatran orangutan).